A 611-amino-acid chain; its full sequence is MQQDVIALKIDDKIIDLQTAEAQGIEGGEPVYFDNSPEALEVIRHSAAHLMAQAIKELYPEAKFYVGPTIENGFYYDLKTETPITDKDLKNIEKKMKALAKKKFDITRYEISMEEAREKFKNDELKQAVLDMIPGDTVSIYKQGDFEDLCRGPHVPNTKYLHNVKLQKVAGAYLGGDSKNEMLTRVYGTAFATKEALQEYLKMLEEAAKRDHRKLGTELELWMFDEEVGAGMPIWLPNGALLRGNLEKLLYSAHIRREYLPVRGPELLRSHMWKISGHYYNYKENMYFTEIENDDPEKPADEYGIKPMNCLAHVKIFGHKVRSYKELPLRLFEFGTVHRHEKSGVLHGLLRVREFTQDDAHIFCRPDQIEEEVIKVLEFVDSIMERFGFNYEMEISTRPEKSIGSDEIWEKATESLKKALNSLNREYGIDEGGGAFYGPKIDIKITDAIGRKWQCGTIQVDFNLPERFDITYVDENNERVRPVMIHRAIIGSFERFIAILTEHYAGEFPTFIAPIKAIFVPIAESHVEYAKKLQKELLEADINTEIFASNDSLNKRIRNAEKRRVGYVVIIGDEEVETGTVAIRDRKKREQYKMTKGEFVEMIKNLSEVKL.

Residues 211-509 are catalytic; it reads DHRKLGTELE…LTEHYAGEFP (299 aa). Zn(2+)-binding residues include cysteine 310, histidine 361, and histidine 486.

It belongs to the class-II aminoacyl-tRNA synthetase family. In terms of assembly, homodimer. It depends on Zn(2+) as a cofactor.

The protein localises to the cytoplasm. The catalysed reaction is tRNA(Thr) + L-threonine + ATP = L-threonyl-tRNA(Thr) + AMP + diphosphate + H(+). Its function is as follows. Catalyzes the attachment of threonine to tRNA(Thr) in a two-step reaction: L-threonine is first activated by ATP to form Thr-AMP and then transferred to the acceptor end of tRNA(Thr). Also edits incorrectly charged L-seryl-tRNA(Thr). This Nautilia profundicola (strain ATCC BAA-1463 / DSM 18972 / AmH) protein is Threonine--tRNA ligase.